Here is a 347-residue protein sequence, read N- to C-terminus: DNA primase small subunit PriS (347 aa).

Residues Asp-95 and Asp-97 contribute to the active site. 4 residues coordinate Zn(2+): Cys-106, His-108, Cys-114, and Cys-117. Positions 106–117 match the Zinc knuckle motif motif; it reads CNHEPGTVCPIC. Asp-280 is an active-site residue.

Belongs to the eukaryotic-type primase small subunit family. In terms of assembly, heterodimer of a small subunit (PriS) and a large subunit (PriL). Both participate in formation of the active center, but the ATP-binding site is exclusively located on the small subunit. The cofactor is Mg(2+). Requires Mn(2+) as cofactor.

Functionally, catalytic subunit of DNA primase, an RNA polymerase that catalyzes the synthesis of short RNA molecules used as primers for DNA polymerase during DNA replication. The small subunit contains the primase catalytic core and has DNA synthesis activity on its own. Binding to the large subunit stabilizes and modulates the activity, increasing the rate of DNA synthesis while decreasing the length of the DNA fragments, and conferring RNA synthesis capability. The DNA polymerase activity may enable DNA primase to also catalyze primer extension after primer synthesis. May also play a role in DNA repair. This is DNA primase small subunit PriS from Pyrococcus furiosus (strain ATCC 43587 / DSM 3638 / JCM 8422 / Vc1).